A 30-amino-acid polypeptide reads, in one-letter code: Bacteriocin curvaticin (30 aa).

An intrachain disulfide couples cysteine 9 to cysteine 14.

Its subcellular location is the secreted. Functionally, has antibacterial activity against the Gram-positive bacterium L.monocytogenes. The chain is Bacteriocin curvaticin from Latilactobacillus curvatus (Lactobacillus curvatus).